Here is a 433-residue protein sequence, read N- to C-terminus: SITKVFARTIFDSRGNPTVEVDLYTSKGLFRAAVPSGASTGVHEALEMRDGDKSKYHGKSVFNAVKNVNDVIVPEIIKSGLKVTQQKECDEFMCKLDGTENKSSLGANAILGVSLAICKAGAAELGIPLYRHIANLANYDEVILPVPAFNVINGGSHAGNKLAMQEFMILPTGATSFTEAMRMGTEVYHHLKAVIKARFGLDATAVGDEGGFAPNILNNKDALDLIQEAIKKAGYTGKIEIGMDVAASEFYKQNNIYDLDFKTANNDGSQKISGDQLRDMYMEFCKDFPIVSIEDPFDQDDWETWSKMTSGTTIQIVGDDLTVTNPKRITTAVEKKACKCLLLKVNQIGSVTESIDAHLLAKKNGWGTMVSHRSGETEDCFIADLVVGLCTGQIKTGAPCRSERLAKYNQILRIEEELGSGAKFAGKNFRAPS.

S1 carries the N-acetylserine modification. Positions 36 and 157 each coordinate (2R)-2-phosphoglycerate. Residue E209 is the Proton donor of the active site. The Mn(2+) site is built by D244, E294, and D319. 3 residues coordinate (2R)-2-phosphoglycerate: K344, R373, and S374. The active-site Proton acceptor is the K344.

It belongs to the enolase family. In terms of assembly, homodimer. It depends on Mg(2+) as a cofactor.

The protein localises to the cytoplasm. The catalysed reaction is (2R)-2-phosphoglycerate = phosphoenolpyruvate + H2O. It functions in the pathway carbohydrate degradation; glycolysis; pyruvate from D-glyceraldehyde 3-phosphate: step 4/5. Inhibited by 2-phosphoglycolic acid. This chain is Enolase, found in Homarus gammarus (European lobster).